The chain runs to 340 residues: Ketol-acid reductoisomerase (NADP(+)) (340 aa).

The 182-residue stretch at methionine 1–threonine 182 folds into the KARI N-terminal Rossmann domain. Residues tyrosine 26–glutamine 29, arginine 49, serine 53, and aspartate 83–glutamine 86 contribute to the NADP(+) site. Residue histidine 108 is part of the active site. Glycine 134 serves as a coordination point for NADP(+). Residues threonine 183–valine 328 form the KARI C-terminal knotted domain. Mg(2+) contacts are provided by aspartate 191, glutamate 195, glutamate 227, and glutamate 231. Serine 252 serves as a coordination point for substrate.

It belongs to the ketol-acid reductoisomerase family. Mg(2+) serves as cofactor.

The catalysed reaction is (2R)-2,3-dihydroxy-3-methylbutanoate + NADP(+) = (2S)-2-acetolactate + NADPH + H(+). It catalyses the reaction (2R,3R)-2,3-dihydroxy-3-methylpentanoate + NADP(+) = (S)-2-ethyl-2-hydroxy-3-oxobutanoate + NADPH + H(+). The protein operates within amino-acid biosynthesis; L-isoleucine biosynthesis; L-isoleucine from 2-oxobutanoate: step 2/4. It participates in amino-acid biosynthesis; L-valine biosynthesis; L-valine from pyruvate: step 2/4. Involved in the biosynthesis of branched-chain amino acids (BCAA). Catalyzes an alkyl-migration followed by a ketol-acid reduction of (S)-2-acetolactate (S2AL) to yield (R)-2,3-dihydroxy-isovalerate. In the isomerase reaction, S2AL is rearranged via a Mg-dependent methyl migration to produce 3-hydroxy-3-methyl-2-ketobutyrate (HMKB). In the reductase reaction, this 2-ketoacid undergoes a metal-dependent reduction by NADPH to yield (R)-2,3-dihydroxy-isovalerate. The protein is Ketol-acid reductoisomerase (NADP(+)) of Streptococcus suis (strain 98HAH33).